The chain runs to 338 residues: D-alanine--D-alanine ligase (338 aa).

The 205-residue stretch at 120 to 324 (KRVMLAEGLP…YEDLCIEVLK (205 aa)) folds into the ATP-grasp domain. Position 150 to 205 (150 to 205 (PDKLGLPLIVKPAREGSSIGLTKVTERAGMADAVAQAEKLDADILCEQFISGDEVT)) interacts with ATP. Positions 277, 291, and 293 each coordinate Mg(2+).

This sequence belongs to the D-alanine--D-alanine ligase family. Mg(2+) serves as cofactor. Requires Mn(2+) as cofactor.

It is found in the cytoplasm. It catalyses the reaction 2 D-alanine + ATP = D-alanyl-D-alanine + ADP + phosphate + H(+). Its pathway is cell wall biogenesis; peptidoglycan biosynthesis. Functionally, cell wall formation. The sequence is that of D-alanine--D-alanine ligase from Polaromonas sp. (strain JS666 / ATCC BAA-500).